The primary structure comprises 155 residues: Anaerobic ribonucleoside-triphosphate reductase-activating protein (155 aa).

[4Fe-4S] cluster-binding residues include Cys26, Cys30, and Cys33. Residues Gly32–Tyr34 and Gly74 contribute to the S-adenosyl-L-methionine site.

It belongs to the organic radical-activating enzymes family. As to quaternary structure, forms a tetramer composed of two NrdD and two NrdG subunits. The cofactor is [4Fe-4S] cluster.

The protein localises to the cytoplasm. It catalyses the reaction glycyl-[protein] + reduced [flavodoxin] + S-adenosyl-L-methionine = glycin-2-yl radical-[protein] + semiquinone [flavodoxin] + 5'-deoxyadenosine + L-methionine + H(+). Its function is as follows. Activation of anaerobic ribonucleoside-triphosphate reductase under anaerobic conditions by generation of an organic free radical, using S-adenosylmethionine and reduced flavodoxin as cosubstrates to produce 5'-deoxy-adenosine. This chain is Anaerobic ribonucleoside-triphosphate reductase-activating protein (nrdG), found in Haemophilus influenzae (strain ATCC 51907 / DSM 11121 / KW20 / Rd).